The primary structure comprises 210 residues: Na(+)-translocating NADH-quinone reductase subunit D (210 aa).

6 consecutive transmembrane segments (helical) span residues 10–30 (VLFGPILDNNPIALQILGVCS), 42–62 (LVMSLALTAVTAFSNLFISMI), 72–92 (IIVQMTIIASLVIVVDQILKA), 103–123 (VFVGLIITNCIVMGRAEAFAM), 143–163 (FVLIVIGTIKELFGFGTILGF), and 178–198 (NGLLILPFSSFFLIGGLIWFI).

This sequence belongs to the NqrDE/RnfAE family. As to quaternary structure, composed of six subunits; NqrA, NqrB, NqrC, NqrD, NqrE and NqrF.

The protein resides in the cell inner membrane. It carries out the reaction a ubiquinone + n Na(+)(in) + NADH + H(+) = a ubiquinol + n Na(+)(out) + NAD(+). In terms of biological role, NQR complex catalyzes the reduction of ubiquinone-1 to ubiquinol by two successive reactions, coupled with the transport of Na(+) ions from the cytoplasm to the periplasm. NqrA to NqrE are probably involved in the second step, the conversion of ubisemiquinone to ubiquinol. The sequence is that of Na(+)-translocating NADH-quinone reductase subunit D from Pseudoalteromonas atlantica (strain T6c / ATCC BAA-1087).